Here is a 259-residue protein sequence, read N- to C-terminus: NH(3)-dependent NAD(+) synthetase (259 aa).

33–40 (GLSGGIDS) serves as a coordination point for ATP. Residue aspartate 39 participates in Mg(2+) binding. Position 119 (arginine 119) interacts with deamido-NAD(+). Threonine 139 is an ATP binding site. Mg(2+) is bound at residue glutamate 144. Lysine 152 and aspartate 159 together coordinate deamido-NAD(+). ATP contacts are provided by lysine 168 and serine 190. 249 to 250 (HK) is a deamido-NAD(+) binding site.

It belongs to the NAD synthetase family. As to quaternary structure, homodimer.

The catalysed reaction is deamido-NAD(+) + NH4(+) + ATP = AMP + diphosphate + NAD(+) + H(+). The protein operates within cofactor biosynthesis; NAD(+) biosynthesis; NAD(+) from deamido-NAD(+) (ammonia route): step 1/1. Its function is as follows. Catalyzes the ATP-dependent amidation of deamido-NAD to form NAD. Uses ammonia as a nitrogen source. The chain is NH(3)-dependent NAD(+) synthetase from Methanocaldococcus jannaschii (strain ATCC 43067 / DSM 2661 / JAL-1 / JCM 10045 / NBRC 100440) (Methanococcus jannaschii).